The following is a 459-amino-acid chain: ATP synthase subunit beta 1 (459 aa).

148–155 (GGAGVGKT) contacts ATP.

This sequence belongs to the ATPase alpha/beta chains family. As to quaternary structure, F-type ATPases have 2 components, CF(1) - the catalytic core - and CF(0) - the membrane proton channel. CF(1) has five subunits: alpha(3), beta(3), gamma(1), delta(1), epsilon(1). CF(0) has three main subunits: a(1), b(2) and c(9-12). The alpha and beta chains form an alternating ring which encloses part of the gamma chain. CF(1) is attached to CF(0) by a central stalk formed by the gamma and epsilon chains, while a peripheral stalk is formed by the delta and b chains.

It is found in the cell inner membrane. The catalysed reaction is ATP + H2O + 4 H(+)(in) = ADP + phosphate + 5 H(+)(out). Functionally, produces ATP from ADP in the presence of a proton gradient across the membrane. The catalytic sites are hosted primarily by the beta subunits. In Nitrosospira multiformis (strain ATCC 25196 / NCIMB 11849 / C 71), this protein is ATP synthase subunit beta 1.